A 278-amino-acid polypeptide reads, in one-letter code: Malonyl-[acyl-carrier protein] O-methyltransferase (278 aa).

This sequence belongs to the methyltransferase superfamily.

It catalyses the reaction malonyl-[ACP] + S-adenosyl-L-methionine = malonyl-[ACP] methyl ester + S-adenosyl-L-homocysteine. It participates in cofactor biosynthesis; biotin biosynthesis. Its function is as follows. Converts the free carboxyl group of a malonyl-thioester to its methyl ester by transfer of a methyl group from S-adenosyl-L-methionine (SAM). It allows to synthesize pimeloyl-ACP via the fatty acid synthetic pathway. This is Malonyl-[acyl-carrier protein] O-methyltransferase from Brevibacillus brevis (strain 47 / JCM 6285 / NBRC 100599).